Reading from the N-terminus, the 347-residue chain is Farnesyl pyrophosphate synthase ERG20 (347 aa).

Isopentenyl diphosphate-binding residues include Lys50, Arg53, and Gln88. Positions 95 and 99 each coordinate Mg(2+). Dimethylallyl diphosphate is bound at residue Arg104. Arg105 provides a ligand contact to isopentenyl diphosphate. Dimethylallyl diphosphate contacts are provided by Lys192, Thr193, Gln232, Lys249, and Lys258.

The protein belongs to the FPP/GGPP synthase family. The cofactor is Mg(2+).

The catalysed reaction is isopentenyl diphosphate + dimethylallyl diphosphate = (2E)-geranyl diphosphate + diphosphate. It catalyses the reaction isopentenyl diphosphate + (2E)-geranyl diphosphate = (2E,6E)-farnesyl diphosphate + diphosphate. It functions in the pathway isoprenoid biosynthesis; farnesyl diphosphate biosynthesis; farnesyl diphosphate from geranyl diphosphate and isopentenyl diphosphate: step 1/1. Its pathway is isoprenoid biosynthesis; geranyl diphosphate biosynthesis; geranyl diphosphate from dimethylallyl diphosphate and isopentenyl diphosphate: step 1/1. Farnesyl pyrophosphate synthase; part of the second module of ergosterol biosynthesis pathway that includes the middle steps of the pathway. ERG20 catalyzes the sequential condensation of isopentenyl pyrophosphate with dimethylallyl pyrophosphate, and then with the resultant geranylpyrophosphate to the ultimate product farnesyl pyrophosphate. The second module is carried out in the vacuole and involves the formation of farnesyl diphosphate, which is also an important intermediate in the biosynthesis of ubiquinone, dolichol, heme and prenylated proteins. Activity by the mevalonate kinase ERG12 (FG05912) first converts mevalonate into 5-phosphomevalonate. 5-phosphomevalonate is then further converted to 5-diphosphomevalonate by the phosphomevalonate kinase ERG8 (FG09764). The diphosphomevalonate decarboxylase ERG19 (FG10424) then produces isopentenyl diphosphate. The isopentenyl-diphosphate delta-isomerase IDI1 (FG09722) then catalyzes the 1,3-allylic rearrangement of the homoallylic substrate isopentenyl (IPP) to its highly electrophilic allylic isomer, dimethylallyl diphosphate (DMAPP). Finally the farnesyl diphosphate synthase ERG20 (FG06784) catalyzes the sequential condensation of isopentenyl pyrophosphate with dimethylallyl pyrophosphate, and then with the resultant geranylpyrophosphate to the ultimate product farnesyl pyrophosphate. This chain is Farnesyl pyrophosphate synthase ERG20, found in Gibberella zeae (strain ATCC MYA-4620 / CBS 123657 / FGSC 9075 / NRRL 31084 / PH-1) (Wheat head blight fungus).